A 70-amino-acid polypeptide reads, in one-letter code: ATP synthase subunit c (70 aa).

The next 2 helical transmembrane spans lie at 4–24 and 47–67; these read IAAG…NGLV and FIGV…ALMV.

This sequence belongs to the ATPase C chain family. As to quaternary structure, F-type ATPases have 2 components, F(1) - the catalytic core - and F(0) - the membrane proton channel. F(1) has five subunits: alpha(3), beta(3), gamma(1), delta(1), epsilon(1). F(0) has three main subunits: a(1), b(2) and c(10-14). The alpha and beta chains form an alternating ring which encloses part of the gamma chain. F(1) is attached to F(0) by a central stalk formed by the gamma and epsilon chains, while a peripheral stalk is formed by the delta and b chains.

The protein resides in the cell membrane. F(1)F(0) ATP synthase produces ATP from ADP in the presence of a proton or sodium gradient. F-type ATPases consist of two structural domains, F(1) containing the extramembraneous catalytic core and F(0) containing the membrane proton channel, linked together by a central stalk and a peripheral stalk. During catalysis, ATP synthesis in the catalytic domain of F(1) is coupled via a rotary mechanism of the central stalk subunits to proton translocation. In terms of biological role, key component of the F(0) channel; it plays a direct role in translocation across the membrane. A homomeric c-ring of between 10-14 subunits forms the central stalk rotor element with the F(1) delta and epsilon subunits. The protein is ATP synthase subunit c of Lactiplantibacillus plantarum (strain ATCC BAA-793 / NCIMB 8826 / WCFS1) (Lactobacillus plantarum).